The chain runs to 345 residues: Nuclear distribution protein nudE-like 1 (345 aa).

Positions 28–190 (QSFQEARDEL…LAVRERQQEV (163 aa)) form a coiled coil. Residues 56-166 (VQAEQRNRDL…LDEKESLLVS (111 aa)) are self-association. The interval 64–189 (DLQADNQRLK…ELAVRERQQE (126 aa)) is interaction with KATNB1. A required for interaction with PAFAH1B1 region spans residues 114 to 133 (YVRELEQANDDLERAKRATI). Residues 175–345 (RDLRQELAVR…SAPGMLPLSV (171 aa)) are interaction with CENPF. The tract at residues 189 to 256 (EVTRKSAPSS…SARISALNIV (68 aa)) is interaction with YWHAE. Residues 191-345 (TRKSAPSSPT…SAPGMLPLSV (155 aa)) are interaction with NEFL. The tract at residues 195-256 (APSSPTLDCE…SARISALNIV (62 aa)) is interaction with KATNA1. Ser215 is modified (phosphoserine). Thr219 carries the phosphothreonine; by CDK1 and MAPK1 modification. Residue Ser231 is modified to Phosphoserine. Positions 241 to 280 (TSPLTPSARISALNIVGDLLRKVGALESKLAACRNFAKDQ) are interaction with DISC1. The residue at position 242 (Ser242) is a Phosphoserine; by CDK1. Thr245 is subject to Phosphothreonine; by CDK1 and MAPK1. The tract at residues 256–291 (VGDLLRKVGALESKLAACRNFAKDQASRKSYISGNV) is required for localization to the centrosome and interaction with dynein, dynactin, tubulin gamma, PCM1 and PCNT. Cys273 carries S-palmitoyl cysteine; by ZDHHC2, ZDHHC3 and ZDHHC7 lipidation. Residues 315-345 (GAVNGFDPAPPPPGLGSSRPSSAPGMLPLSV) are disordered. A compositionally biased stretch (low complexity) spans 329–339 (LGSSRPSSAPG). Ser344 bears the Phosphoserine mark.

It belongs to the nudE family. As to quaternary structure, interacts with PLEKHM1 (via N- and C-terminus). Interacts with YWHAE. Interacts directly with NEFL and indirectly with NEFH. Interacts with microtubules. Self-associates. Interacts with DISC1, dynein, dynactin, tubulin gamma, KATNA1, KATNB1, PAFAH1B1, PCM1 and PCNT. Interacts (via C-terminus) with CENPF. Interacts with ZNF365. Interacts with GTP-bound RAB9A; the interaction may lead to RAB9A-dynein motor tethering. Post-translationally, phosphorylated in mitosis. Can be phosphorylated by CDK1, CDK5 and MAPK1. Phosphorylation by CDK5 promotes interaction with KATNA1 and YWHAE. In terms of processing, palmitoylation at Cys-273 reduces affinity for dynein. As to expression, expressed in brain, heart, kidney, liver, lung, pancreas, placenta and skeletal muscle.

Its subcellular location is the cytoplasm. The protein localises to the cytoskeleton. The protein resides in the microtubule organizing center. It localises to the centrosome. It is found in the chromosome. Its subcellular location is the centromere. The protein localises to the kinetochore. The protein resides in the spindle. In terms of biological role, required for organization of the cellular microtubule array and microtubule anchoring at the centrosome. May regulate microtubule organization at least in part by targeting the microtubule severing protein KATNA1 to the centrosome. Also positively regulates the activity of the minus-end directed microtubule motor protein dynein. May enhance dynein-mediated microtubule sliding by targeting dynein to the microtubule plus ends. Required for several dynein- and microtubule-dependent processes such as the maintenance of Golgi integrity, the centripetal motion of secretory vesicles and the coupling of the nucleus and centrosome. Also required during brain development for the migration of newly formed neurons from the ventricular/subventricular zone toward the cortical plate. Plays a role, together with DISC1, in the regulation of neurite outgrowth. Required for mitosis in some cell types but appears to be dispensible for mitosis in cortical neuronal progenitors, which instead requires NDE1. Facilitates the polymerization of neurofilaments from the individual subunits NEFH and NEFL. Positively regulates lysosome peripheral distribution and ruffled border formation in osteoclasts. Plays a role, together with DISC1, in the regulation of neurite outgrowth. May act as a RAB9A/B effector that tethers RAB9-associated late endosomes to the dynein motor for their retrograde transport to the trans-Golgi network. The polypeptide is Nuclear distribution protein nudE-like 1 (NDEL1) (Homo sapiens (Human)).